A 399-amino-acid chain; its full sequence is Tryptophan synthase beta chain (399 aa).

Residue lysine 92 is modified to N6-(pyridoxal phosphate)lysine.

It belongs to the TrpB family. As to quaternary structure, tetramer of two alpha and two beta chains. The cofactor is pyridoxal 5'-phosphate.

The catalysed reaction is (1S,2R)-1-C-(indol-3-yl)glycerol 3-phosphate + L-serine = D-glyceraldehyde 3-phosphate + L-tryptophan + H2O. Its pathway is amino-acid biosynthesis; L-tryptophan biosynthesis; L-tryptophan from chorismate: step 5/5. Its function is as follows. The beta subunit is responsible for the synthesis of L-tryptophan from indole and L-serine. The chain is Tryptophan synthase beta chain from Bordetella petrii (strain ATCC BAA-461 / DSM 12804 / CCUG 43448).